The following is a 565-amino-acid chain: Sulfite reductase [NADPH] hemoprotein beta-component (565 aa).

Residues Cys-429, Cys-435, Cys-474, and Cys-478 each contribute to the [4Fe-4S] cluster site. Position 478 (Cys-478) interacts with siroheme.

This sequence belongs to the nitrite and sulfite reductase 4Fe-4S domain family. In terms of assembly, alpha(8)-beta(8). The alpha component is a flavoprotein, the beta component is a hemoprotein. It depends on siroheme as a cofactor. [4Fe-4S] cluster is required as a cofactor.

It catalyses the reaction hydrogen sulfide + 3 NADP(+) + 3 H2O = sulfite + 3 NADPH + 4 H(+). Its pathway is sulfur metabolism; hydrogen sulfide biosynthesis; hydrogen sulfide from sulfite (NADPH route): step 1/1. Its function is as follows. Component of the sulfite reductase complex that catalyzes the 6-electron reduction of sulfite to sulfide. This is one of several activities required for the biosynthesis of L-cysteine from sulfate. In Shewanella baltica (strain OS155 / ATCC BAA-1091), this protein is Sulfite reductase [NADPH] hemoprotein beta-component.